Here is a 552-residue protein sequence, read N- to C-terminus: FERRY endosomal RAB5 effector complex subunit 3 (552 aa).

A disordered region spans residues 383–403 (LKESLDSGNQNGGNDDKTKNA).

In terms of assembly, component of the FERRY complex composed of five subunits, TBCK, PPP1R21, FERRY3, CRYZL1 and GATD1 with a ratio of 1:2:1:2:4, respectively.

Its subcellular location is the cytoplasm. The protein resides in the early endosome. In terms of biological role, component of the FERRY complex (Five-subunit Endosomal Rab5 and RNA/ribosome intermediary). The FERRY complex directly interacts with mRNAs and RAB5A, and functions as a RAB5A effector involved in the localization and the distribution of specific mRNAs most likely by mediating their endosomal transport. The complex recruits mRNAs and ribosomes to early endosomes through direct mRNA-interaction. Plays a role in mast cell degranulation. The sequence is that of FERRY endosomal RAB5 effector complex subunit 3 from Pongo abelii (Sumatran orangutan).